A 532-amino-acid chain; its full sequence is Metal-staphylopine-binding protein CntA (532 aa).

An N-terminal signal peptide occupies residues 1 to 20; sequence MRKLTKMSAMLLASGLILTG. Residue cysteine 21 is the site of N-palmitoyl cysteine attachment. Cysteine 21 carries the S-diacylglycerol cysteine lipid modification. Residues arginine 165, arginine 418, and asparagine 448 each coordinate staphylopine.

It belongs to the bacterial solute-binding protein 5 family. The complex is composed of two ATP-binding proteins (CntD and CntF), two transmembrane proteins (CntB and CntC) and a solute-binding protein (CntA).

It is found in the cell membrane. With respect to regulation, nickel/cobalt import is reduced in the presence of zinc. Functionally, part of the ABC transporter complex CntABCDF (Opp1) involved in the uptake of metal in complex with the metallophore staphylopine (StP). Involved in the import of divalent metals ions such as nickel, cobalt and zinc. Binds the metal via the metallophore StP, and transfers the StP-metal complex to the membrane-bound permease. Binds one molecule of StP/metal. Binds StP/Co(2+) and StP/Ni(2+) tighter than StP/Zn(2+). Plays a major role in nickel/cobalt import in zinc-depleted conditions. Contributes to virulence. Required for full urease activity in vitro. This is Metal-staphylopine-binding protein CntA from Staphylococcus aureus (strain NCTC 8325 / PS 47).